A 338-amino-acid chain; its full sequence is Biotin synthase (338 aa).

The Radical SAM core domain occupies 59-284; the sequence is EEVEIEGIVS…RTTLRFAGGR (226 aa). Positions 74, 78, and 81 each coordinate [4Fe-4S] cluster. Residues cysteine 117, cysteine 209, and arginine 279 each contribute to the [2Fe-2S] cluster site.

The protein belongs to the radical SAM superfamily. Biotin synthase family. Homodimer. [4Fe-4S] cluster is required as a cofactor. It depends on [2Fe-2S] cluster as a cofactor.

It carries out the reaction (4R,5S)-dethiobiotin + (sulfur carrier)-SH + 2 reduced [2Fe-2S]-[ferredoxin] + 2 S-adenosyl-L-methionine = (sulfur carrier)-H + biotin + 2 5'-deoxyadenosine + 2 L-methionine + 2 oxidized [2Fe-2S]-[ferredoxin]. The protein operates within cofactor biosynthesis; biotin biosynthesis; biotin from 7,8-diaminononanoate: step 2/2. In terms of biological role, catalyzes the conversion of dethiobiotin (DTB) to biotin by the insertion of a sulfur atom into dethiobiotin via a radical-based mechanism. The protein is Biotin synthase of Corynebacterium urealyticum (strain ATCC 43042 / DSM 7109).